A 570-amino-acid chain; its full sequence is Aspartyl aminopeptidase (570 aa).

His86 contributes to the Zn(2+) binding site. Residue His160 coordinates substrate. Zn(2+) is bound at residue Asp324. Glu379 is a substrate binding site. 2 residues coordinate Zn(2+): Glu380 and Asp434. The substrate site is built by Asp434, His437, Lys462, and Tyr469. His534 is a Zn(2+) binding site.

Belongs to the peptidase M18 family. In terms of assembly, homododecamer composed of homodimers and homotrimers that assemble into a tetrahedron shape to create a central tunnel containing the active sites. Homooctamer. Requires Zn(2+) as cofactor.

The protein resides in the cytoplasm. The enzyme catalyses Release of an N-terminal aspartate or glutamate from a peptide, with a preference for aspartate.. With respect to regulation, activated by Co(2+). Inhibited by high concentrations (&gt;1mM) of Zn(2+). Aminopeptidase which specifically catalyzes the removal of glutamic acid or aspartic acid residues from the N-terminus of peptides. May play a role in the final step of host hemoglobin catabolism, by cleaving hemoglobin-derived oligopeptides in the cytoplasm. The sequence is that of Aspartyl aminopeptidase from Plasmodium falciparum (isolate 3D7).